A 338-amino-acid polypeptide reads, in one-letter code: Fe(3+)-binding periplasmic protein (338 aa).

A signal peptide spans 1-26 (MKLRISSLGPVALLASSMMLAFGAQA). H40, E88, Y224, and Y225 together coordinate Fe cation.

It belongs to the bacterial solute-binding protein 1 family. In terms of assembly, the complex is composed of two ATP-binding proteins (FbpC), two transmembrane proteins (FbpB) and a solute-binding protein (FbpA).

It is found in the periplasm. Its function is as follows. Part of the ABC transporter complex FbpABC (TC 3.A.1.10.1) involved in Fe(3+) ions import. This protein specifically binds Fe(3+) and is involved in its transmembrane transport. The sequence is that of Fe(3+)-binding periplasmic protein (fbpA) from Serratia marcescens.